We begin with the raw amino-acid sequence, 609 residues long: Phosphoenolpyruvate carboxykinase [GTP] (609 aa).

Residues R81 and 220–222 (YGG) contribute to the substrate site. The Mn(2+) site is built by K229 and H249. S271 is a substrate binding site. 272–277 (ACGKTN) serves as a coordination point for GTP. C273 is a catalytic residue. D296 contacts Mn(2+). 387-389 (NSR) is a binding site for substrate. Residues R389, R420, and 515–518 (FGEN) each bind GTP.

This sequence belongs to the phosphoenolpyruvate carboxykinase [GTP] family. As to quaternary structure, monomer. Mn(2+) is required as a cofactor.

It localises to the cytoplasm. The enzyme catalyses oxaloacetate + GTP = phosphoenolpyruvate + GDP + CO2. The protein operates within carbohydrate biosynthesis; gluconeogenesis. Its function is as follows. Catalyzes the conversion of oxaloacetate (OAA) to phosphoenolpyruvate (PEP), the rate-limiting step in the metabolic pathway that produces glucose from lactate and other precursors derived from the citric acid cycle. The polypeptide is Phosphoenolpyruvate carboxykinase [GTP] (Mycobacterium marinum (strain ATCC BAA-535 / M)).